Here is a 504-residue protein sequence, read N- to C-terminus: Maturase K (504 aa).

It belongs to the intron maturase 2 family. MatK subfamily.

It localises to the plastid. The protein localises to the chloroplast. Its function is as follows. Usually encoded in the trnK tRNA gene intron. Probably assists in splicing its own and other chloroplast group II introns. In Calyptranthes pallens (Spicewood), this protein is Maturase K.